The following is a 491-amino-acid chain: 3-octaprenyl-4-hydroxybenzoate carboxy-lyase (491 aa).

Asn-172 is a Mn(2+) binding site. Prenylated FMN is bound by residues 175-177 (IYR), 189-191 (RWL), and 194-195 (RG). Residue Glu-238 coordinates Mn(2+). Asp-287 acts as the Proton donor in catalysis.

The protein belongs to the UbiD family. In terms of assembly, homohexamer. It depends on prenylated FMN as a cofactor. Mn(2+) is required as a cofactor.

Its subcellular location is the cell membrane. It catalyses the reaction a 4-hydroxy-3-(all-trans-polyprenyl)benzoate + H(+) = a 2-(all-trans-polyprenyl)phenol + CO2. It functions in the pathway cofactor biosynthesis; ubiquinone biosynthesis. Catalyzes the decarboxylation of 3-octaprenyl-4-hydroxy benzoate to 2-octaprenylphenol, an intermediate step in ubiquinone biosynthesis. This chain is 3-octaprenyl-4-hydroxybenzoate carboxy-lyase, found in Histophilus somni (strain 2336) (Haemophilus somnus).